The chain runs to 393 residues: Elongation factor Tu (393 aa).

The region spanning 10 to 203 is the tr-type G domain; the sequence is KPHVNIGTIG…AVDDYIPEPV (194 aa). A G1 region spans residues 19–26; sequence GHVDHGKT. 19 to 26 is a binding site for GTP; that stretch reads GHVDHGKT. T26 lines the Mg(2+) pocket. Residues 60-64 are G2; the sequence is GITIS. A G3 region spans residues 81 to 84; the sequence is DCPG. GTP contacts are provided by residues 81 to 85 and 136 to 139; these read DCPGH and NKVD. The segment at 136 to 139 is G4; the sequence is NKVD. The segment at 173-175 is G5; the sequence is SAL.

Belongs to the TRAFAC class translation factor GTPase superfamily. Classic translation factor GTPase family. EF-Tu/EF-1A subfamily. Monomer.

It is found in the cytoplasm. It catalyses the reaction GTP + H2O = GDP + phosphate + H(+). GTP hydrolase that promotes the GTP-dependent binding of aminoacyl-tRNA to the A-site of ribosomes during protein biosynthesis. This Chlorobaculum parvum (strain DSM 263 / NCIMB 8327) (Chlorobium vibrioforme subsp. thiosulfatophilum) protein is Elongation factor Tu.